Reading from the N-terminus, the 122-residue chain is Ig heavy chain V region M603 (122 aa).

In terms of domain architecture, Ig-like spans 1–121 (EVKLVESGGG…WGAGTTVTVS (121 aa)).

This is Ig heavy chain V region M603 from Mus musculus (Mouse).